The sequence spans 47 residues: uncharacterized protein (47 aa).

2 disordered regions span residues methionine 1 to glutamine 20 and glutamate 25 to glycine 47. The span at glutamate 25 to glutamine 40 shows a compositional bias: basic and acidic residues.

This is an uncharacterized protein from Dictyostelium discoideum (Social amoeba).